A 43-amino-acid polypeptide reads, in one-letter code: Photosystem II reaction center protein Y (43 aa).

A helical transmembrane segment spans residues Leu8–Ile26.

It belongs to the PsbY family. In terms of assembly, PSII is composed of 1 copy each of membrane proteins PsbA, PsbB, PsbC, PsbD, PsbE, PsbF, PsbH, PsbI, PsbJ, PsbK, PsbL, PsbM, PsbT, PsbX, PsbY, PsbZ, Psb30/Ycf12, peripheral proteins PsbO, CyanoQ (PsbQ), PsbU, PsbV and a large number of cofactors. It forms dimeric complexes.

It localises to the cellular thylakoid membrane. Loosely associated component of the core of photosystem II (PSII), it is not always seen in crystals. PSII is a light-driven water plastoquinone oxidoreductase, using light energy to abstract electrons from H(2)O, generating a proton gradient subsequently used for ATP formation. The protein is Photosystem II reaction center protein Y of Parasynechococcus marenigrum (strain WH8102).